The primary structure comprises 291 residues: MADLDDIKDGKDFRTDQPQQNIPFTLKGCGALDWGMQSRLSRIFNPKTGNTVMLAFDHGYFQGPTTGLERIDINIAPLFEHADVLMCTRGILRSVVPPATNKPVVLRASGANSILAELSNEAVALSMDDAVRLNSCAVAAQVYIGSEYEHQSIKNIIQLVDAGMKVGMPTMAVTGVGKDMVRDQRYFSLATRIAAEMGAQIIKTYYVEKGFERIVAGCPVPIVIAGGKKLPEREALEMCWQAIDQGASGVDMGRNIFQSDHPVAMMKAVQAVVHHNETADRAYELYLSEKQ.

Catalysis depends on K203, which acts as the Schiff-base intermediate with substrate.

Belongs to the DeoC/FbaB aldolase family. As to quaternary structure, homodecamer.

Its subcellular location is the cytoplasm. It carries out the reaction dihydroxyacetone phosphate + acetyl-CoA = 3-hydroxy-2,4-dioxopentyl phosphate + CoA. In terms of biological role, involved in the degradation of phospho-AI-2, thereby terminating induction of the lsr operon and closing the AI-2 signaling cycle. Catalyzes the transfer of an acetyl moiety from 3-hydroxy-5-phosphonooxypentane-2,4-dione to CoA to form glycerone phosphate and acetyl-CoA. This Escherichia coli O139:H28 (strain E24377A / ETEC) protein is 3-hydroxy-5-phosphonooxypentane-2,4-dione thiolase.